A 750-amino-acid chain; its full sequence is Protein O-mannosyl-transferase 2 (750 aa).

A disordered region spans residues 1–23 (MPPATGGGLAESELRPRRGRCGP). Position 41 is a phosphoserine (Ser-41). Residues 54–74 (AVGWWALLALVTLLSFATRFH) form a helical membrane-spanning segment. Asn-98 is a glycosylation site (N-linked (GlcNAc...) asparagine). Helical transmembrane passes span 100 to 120 (TFFFDVHPPLGKMLIGLAGYL), 146 to 166 (GFCAFLGSWLVPFAYLTVLDL), 191 to 211 (QYILLDPILMFFIMAAMLSMV), 231 to 251 (LTGVSLAGALGVKFVGLFIIL), and 283 to 303 (VLCLIVLPLALYTATFAVHFM). Asn-330 carries N-linked (GlcNAc...) asparagine glycosylation. MIR domains are found at residues 334 to 390 (PEHL…IKKH), 403 to 459 (VEFV…IEVV), and 464 to 521 (GNRI…VEDH). Residue Asn-445 is glycosylated (N-linked (GlcNAc...) asparagine). N-linked (GlcNAc...) asparagine glycans are attached at residues Asn-528 and Asn-583. 4 helical membrane-spanning segments follow: residues 596 to 616 (VVWWLNLLSIALYLLSGSIIA), 643 to 663 (VLLGWTLHYFPFFLMGRVLYF), 665 to 685 (HYFPAMLFSSMLTGILWDTLL), and 700 to 720 (GIHVAGILSLLLGTAYSFYLF).

The protein belongs to the glycosyltransferase 39 family. In terms of assembly, interacts with POMT1. In terms of processing, N-glycosylated. In terms of tissue distribution, highly expressed in testis; detected at low levels in most tissues.

It is found in the endoplasmic reticulum membrane. The catalysed reaction is a di-trans,poly-cis-dolichyl beta-D-mannosyl phosphate + L-seryl-[protein] = 3-O-(alpha-D-mannosyl)-L-seryl-[protein] + a di-trans,poly-cis-dolichyl phosphate + H(+). It catalyses the reaction a di-trans,poly-cis-dolichyl beta-D-mannosyl phosphate + L-threonyl-[protein] = 3-O-(alpha-D-mannosyl)-L-threonyl-[protein] + a di-trans,poly-cis-dolichyl phosphate + H(+). The protein operates within protein modification; protein glycosylation. Slightly activated by Mg(2+) and inhibited by both Ca(+) and Mn(2+). EDTA ha no effect on activity in vitro. In terms of biological role, transfers mannosyl residues to the hydroxyl group of serine or threonine residues. Coexpression of both POMT1 and POMT2 is necessary for enzyme activity, expression of either POMT1 or POMT2 alone is insufficient. Essentially dedicated to O-mannosylation of alpha-DAG1 and few other proteins but not of cadherins and protocaherins. The sequence is that of Protein O-mannosyl-transferase 2 (POMT2) from Homo sapiens (Human).